The sequence spans 426 residues: Dihydroorotase (426 aa).

Zn(2+) is bound by residues H58 and H60. Substrate is bound by residues 60 to 62 (HLR) and N92. Positions 150, 177, and 230 each coordinate Zn(2+). N276 is a binding site for substrate. D303 lines the Zn(2+) pocket. Residue D303 is part of the active site. Substrate-binding positions include H307 and 321–322 (FG).

It belongs to the metallo-dependent hydrolases superfamily. DHOase family. Class I DHOase subfamily. Zn(2+) is required as a cofactor.

It carries out the reaction (S)-dihydroorotate + H2O = N-carbamoyl-L-aspartate + H(+). The protein operates within pyrimidine metabolism; UMP biosynthesis via de novo pathway; (S)-dihydroorotate from bicarbonate: step 3/3. Functionally, catalyzes the reversible cyclization of carbamoyl aspartate to dihydroorotate. In Listeria monocytogenes serotype 4b (strain CLIP80459), this protein is Dihydroorotase.